The sequence spans 132 residues: Histone H2A-alpha (132 aa).

Ser-2 carries the N-acetylserine modification. Lys-5 and Lys-9 each carry N6-acetyllysine. Gln-106 is subject to N5-methylglutamine. Ser-129 bears the Phosphoserine mark. The short motif at 129-130 (SQ) is the [ST]-Q motif element.

This sequence belongs to the histone H2A family. As to quaternary structure, the nucleosome is a histone octamer containing two molecules each of H2A, H2B, H3 and H4 assembled in one H3-H4 heterotetramer and two H2A-H2B heterodimers. The octamer wraps approximately 147 bp of DNA. Interacts with mdb1 (via BRCT domain) in vitro; this interaction requires phosphorylation of this protein at the S/T-Q motif. In terms of processing, phosphorylated to form H2AS128ph (gamma-H2A) in response to DNA double-strand breaks (DSBs) generated by exogenous genotoxic agents and by stalled replication forks. Phosphorylation is dependent on the DNA damage checkpoint kinases rad3/ATR and tel1/ATM, spreads on either side of a detected DSB site and may mark the surrounding chromatin for recruitment of proteins required for DNA damage signaling and repair. Gamma-H2A is required for recruiting crb2, a modulator of DNA damage checkpoint signaling, to DSB sites. Gamma-H2A is removed from the DNA prior to the strand invasion-primer extension step of the repair process and subsequently dephosphorylated. Dephosphorylation is necessary for efficient recovery from the DNA damage checkpoint. Post-translationally, acetylated by esa1 to form H2AK4ac and H2AK7ac.

It localises to the nucleus. The protein localises to the chromosome. Core component of nucleosome which plays a central role in DNA double strand break (DSB) repair. Nucleosomes wrap and compact DNA into chromatin, limiting DNA accessibility to the cellular machineries which require DNA as a template. Histones thereby play a central role in transcription regulation, DNA repair, DNA replication and chromosomal stability. DNA accessibility is regulated via a complex set of post-translational modifications of histones, also called histone code, and nucleosome remodeling. This is Histone H2A-alpha (hta1) from Schizosaccharomyces pombe (strain 972 / ATCC 24843) (Fission yeast).